Reading from the N-terminus, the 78-residue chain is Large ribosomal subunit protein bL31 (78 aa).

It belongs to the bacterial ribosomal protein bL31 family. Type A subfamily. As to quaternary structure, part of the 50S ribosomal subunit.

In terms of biological role, binds the 23S rRNA. This chain is Large ribosomal subunit protein bL31 (rpmE), found in Rickettsia felis (strain ATCC VR-1525 / URRWXCal2) (Rickettsia azadi).